The following is a 197-amino-acid chain: Imidazoleglycerol-phosphate dehydratase (197 aa).

This sequence belongs to the imidazoleglycerol-phosphate dehydratase family.

It is found in the cytoplasm. It catalyses the reaction D-erythro-1-(imidazol-4-yl)glycerol 3-phosphate = 3-(imidazol-4-yl)-2-oxopropyl phosphate + H2O. It participates in amino-acid biosynthesis; L-histidine biosynthesis; L-histidine from 5-phospho-alpha-D-ribose 1-diphosphate: step 6/9. The polypeptide is Imidazoleglycerol-phosphate dehydratase (Nitrobacter hamburgensis (strain DSM 10229 / NCIMB 13809 / X14)).